The chain runs to 663 residues: Heparan-alpha-glucosaminide N-acetyltransferase (663 aa).

Residues 1 to 24 (MTGARASAAEQRRAGRSGQARAAE) are disordered. The Lumenal, vesicle portion of the chain corresponds to 1 to 190 (MTGARASAAE…LAVNEDPVDS (190 aa)). 3 N-linked (GlcNAc...) asparagine glycosylation sites follow: Asn94, Asn142, and Asn162. Cys151 and Cys462 are oxidised to a cystine. Residues 191-211 (NLPVSIAFLIGLAVIIVISFL) traverse the membrane as a helical segment. The Cytoplasmic segment spans residues 212–275 (RLLLSLDDFN…PRLRSVDTFR (64 aa)). 2 positions are modified to phosphoserine: Ser243 and Ser245. Residues 276-296 (GIALILMVFVNYGGGKYWYFK) form a helical membrane-spanning segment. Residue His297 is part of the active site. At 297–302 (HASWNG) the chain is on the lumenal, vesicle side. The helical transmembrane segment at 303–323 (LTVADLVFPWFVFIMGSSIFL) threads the bilayer. The Cytoplasmic portion of the chain corresponds to 324 to 345 (SMTSILQRGCSKFRLLGKIAWR). Residues 346–366 (SFLLICIGIIIVNPNYCLGPL) form a helical membrane-spanning segment. The Lumenal, vesicle segment spans residues 367-374 (SWDKVRIP). Residues 375–395 (GVLQRLGVTYFVVAVLELLFA) traverse the membrane as a helical segment. The Cytoplasmic segment spans residues 396 to 420 (KPVPEHCASERSCLSLRDITSSWPQ). The chain crosses the membrane as a helical span at residues 421–441 (WLLILVLEGLWLGLTFLLPVP). The Lumenal, vesicle segment spans residues 442–500 (GCPTGYLGPGGIGDFGKYPNCTGGAAGYIDRLLLGDDHLYQHPSSAVLYHTEVAYDPEG). Residues 501-521 (ILGTINSIVMAFLGVQAGKIL) traverse the membrane as a helical segment. Over 522–529 (LYYKARTK) the chain is Cytoplasmic. Residues 530–550 (DILIRFTAWCCILGLISVALT) form a helical membrane-spanning segment. The Lumenal, vesicle segment spans residues 551–564 (KVSENEGFIPVNKN). The helical transmembrane segment at 565-585 (LWSLSYVTTLSSFAFFILLVL) threads the bilayer. Residues 586 to 592 (YPVVDVK) lie on the Cytoplasmic side of the membrane. A helical membrane pass occupies residues 593-613 (GLWTGTPFFYPGMNSILVYVG). Over 614–634 (HEVFENYFPFQWKLKDNQSHK) the chain is Lumenal, vesicle. Positions 624 to 635 (QWKLKDNQSHKE) are lysosomal targeting region. Residues 635–655 (EHLTQNIVATALWVLIAYILY) form a helical membrane-spanning segment. At 656 to 663 (RKKIFWKI) the chain is on the cytoplasmic side.

Homooligomer. Homooligomerization is necessary for enzyme activity. Undergoes intralysosomal proteolytic cleavage; occurs within the end of the first and/or the beginning of the second luminal domain and is essential for the activation of the enzyme. In terms of processing, glycosylated. As to expression, widely expressed, with highest level in leukocytes, heart, liver, skeletal muscle, lung, placenta and liver.

It localises to the lysosome membrane. It carries out the reaction alpha-D-glucosaminyl-[heparan sulfate](n) + acetyl-CoA = N-acetyl-alpha-D-glucosaminyl-[heparan sulfate](n) + CoA + H(+). In terms of biological role, lysosomal acetyltransferase that acetylates the non-reducing terminal alpha-glucosamine residue of intralysosomal heparin or heparan sulfate, converting it into a substrate for luminal alpha-N-acetyl glucosaminidase. The sequence is that of Heparan-alpha-glucosaminide N-acetyltransferase (HGSNAT) from Homo sapiens (Human).